Consider the following 506-residue polypeptide: MTTASASNAASSAIPAVNAETPVRVRFCPSPTGTPHVGLIRTALFNWAYARHTGGKLIFRIEDTDSARDSEESYHQLLDALKWLGINWDEGVEVGGPHEPYRQSQRGDIYQDVIAKLKAGGHVYESYSTPDEIEARHKAAGRDPKLGYDGFDRHLTDEQLAQFKAEGREAVLRLRMPDEDLTFNDLVRGEITFKAGSVPDFAVVRANGAPLYTLVNPVDDALMGITHVLRGEDLLSSTPRQIALYRALYAIGVAEYMPEFGHLPYVMGQGNKKLSKRDPESSLFLHRERGFIPEGLLNYLSLLGWSLSADEDIFTVEQLVANFDIHDVLGNPARFDIKKAEAINGTHVRMLAAEDFKERLVPYLRAAGFVGEILTPRQEEILAEAAPLVQERITLLGEAPEMLAFLFKADDAIDVADDARKGLPQNLEEVLDAALAALEPIGEWTAENIQTALKQALVEDLGIKPRAAFGPVRTAISGRRISPPLFESMVILGKDSSLARVRAFRG.

Residues Pro29 to Leu39 carry the 'HIGH' region motif. The 'KMSKS' region motif lies at Lys273 to Arg277. Lys276 is an ATP binding site.

This sequence belongs to the class-I aminoacyl-tRNA synthetase family. Glutamate--tRNA ligase type 1 subfamily. Monomer.

Its subcellular location is the cytoplasm. The catalysed reaction is tRNA(Glu) + L-glutamate + ATP = L-glutamyl-tRNA(Glu) + AMP + diphosphate. In terms of biological role, catalyzes the attachment of glutamate to tRNA(Glu) in a two-step reaction: glutamate is first activated by ATP to form Glu-AMP and then transferred to the acceptor end of tRNA(Glu). The polypeptide is Glutamate--tRNA ligase (Paenarthrobacter aurescens (strain TC1)).